Reading from the N-terminus, the 335-residue chain is Mycobacterial beta-ketoacyl-[acyl-carrier-protein] synthase III (335 aa).

Catalysis depends on residues Cys122 and His258. An ACP-binding region spans residues 259 to 263 (QANSR). Residue Asn289 is part of the active site.

Belongs to the thiolase-like superfamily. FabH family. In terms of assembly, homodimer.

Its subcellular location is the cytoplasm. The enzyme catalyses malonyl-[ACP] + dodecanoyl-CoA + H(+) = 3-oxotetradecanoyl-[ACP] + CO2 + CoA. It functions in the pathway lipid metabolism; fatty acid biosynthesis. The protein operates within lipid metabolism; mycolic acid biosynthesis. Catalyzes the condensation reaction of fatty acid synthesis by the addition to an acyl acceptor of two carbons from malonyl-ACP. Catalyzes the first condensation reaction which initiates fatty acid synthesis and may therefore play a role in governing the total rate of fatty acid production. Possesses both acetoacetyl-ACP synthase and acetyl transacylase activities. Its substrate specificity determines the biosynthesis of branched-chain and/or straight-chain of fatty acids. The protein is Mycobacterial beta-ketoacyl-[acyl-carrier-protein] synthase III of Mycobacterium ulcerans (strain Agy99).